The primary structure comprises 421 residues: UDP-N-acetylglucosamine 1-carboxyvinyltransferase (421 aa).

22–23 contributes to the phosphoenolpyruvate binding site; that stretch reads KN. UDP-N-acetyl-alpha-D-glucosamine is bound at residue arginine 92. Cysteine 116 serves as the catalytic Proton donor. Cysteine 116 is subject to 2-(S-cysteinyl)pyruvic acid O-phosphothioketal. UDP-N-acetyl-alpha-D-glucosamine contacts are provided by residues 121 to 125, aspartate 304, and isoleucine 326; that span reads RPVDQ.

It belongs to the EPSP synthase family. MurA subfamily.

Its subcellular location is the cytoplasm. It catalyses the reaction phosphoenolpyruvate + UDP-N-acetyl-alpha-D-glucosamine = UDP-N-acetyl-3-O-(1-carboxyvinyl)-alpha-D-glucosamine + phosphate. It participates in cell wall biogenesis; peptidoglycan biosynthesis. Its function is as follows. Cell wall formation. Adds enolpyruvyl to UDP-N-acetylglucosamine. The protein is UDP-N-acetylglucosamine 1-carboxyvinyltransferase of Bordetella avium (strain 197N).